We begin with the raw amino-acid sequence, 2025 residues long: Pericentriolar material 1 protein (2025 aa).

A disordered region spans residues 1 to 91; the sequence is MATGGGPFEE…TFPHSRYMTQ (91 aa). A2 carries the post-translational modification N-acetylalanine. The tract at residues 2–1458 is mediates interaction with DZIP1; that stretch reads ATGGGPFEEV…TWVASNSELT (1457 aa). A phosphoserine mark is found at S65, S68, S69, S93, S110, S116, S119, and S159. The tract at residues 111 to 140 is disordered; it reads DLDQRSIGSDSQGRATAANNKRQLSENRKP. Positions 116–132 are enriched in polar residues; sequence SIGSDSQGRATAANNKR. Residues 218–301 adopt a coiled-coil conformation; it reads KASSMREDLV…QLRALQGRQA (84 aa). The disordered stretch occupies residues 354-390; that stretch reads RDSQPPAVPDNRRQAESLSLTREISQSRNPSVSEHLP. The segment covering 369-385 has biased composition (polar residues); the sequence is ESLSLTREISQSRNPSV. Residue S370 is modified to Phosphoserine. A Phosphoserine; by PLK4 modification is found at S372. S384 bears the Phosphoserine mark. At K399 the chain carries N6-acetyllysine. Coiled coils occupy residues 399-426 and 492-518; these read KMRVLQEKKQKMDKLLGELHNLRDQHLN and AEKLQKLNEVQKRLNELRELVHYYEQT. 2 disordered regions span residues 528 to 553 and 565 to 586; these read ENTKDEETEESEYDSEHENSEPVTNI and VNTNSNTQCGSNNRDGRPVNSN. Residues 531 to 540 are compositionally biased toward acidic residues; it reads KDEETEESEY. A Phosphoserine modification is found at S593. Positions 620–654 are disordered; that stretch reads AHGEDEEEEVEEEGVSGASLSSRRSSLVDEAPEDE. Residues 623-633 are compositionally biased toward acidic residues; it reads EDEEEEVEEEG. Over residues 634 to 644 the composition is skewed to low complexity; that stretch reads VSGASLSSRRS. S644 carries the post-translational modification Phosphoserine. Coiled-coil stretches lie at residues 652–772 and 822–856; these read EDEE…PDLQ and SDMRRHEMLREELRQRRKQLEALMAEHQRRQGLAE. T857 bears the Phosphothreonine mark. Phosphoserine is present on residues S859, S864, S867, and S870. Disordered stretches follow at residues 866–885 and 913–940; these read RSDGSENLCTPQQSRTEKTM and TDEEEEEEQDASSNDNFPIYPPSMNQNS. A compositionally biased stretch (polar residues) spans 870–879; it reads SENLCTPQQS. A Phosphothreonine modification is found at T875. Phosphoserine is present on residues S957, S974, S985, and S988. Coiled-coil stretches lie at residues 985-1017 and 1061-1086; these read SELSYIEEKEQWQEQINQLKKQLDFSVNICQTL and QLTWQQNNVQRLKQMLTELMRQQNQH. 2 disordered regions span residues 1081–1105 and 1149–1213; these read RQQNQHPEKPRSKERGSSASHPSSP and FSQN…YDQE. The span at 1086–1096 shows a compositional bias: basic and acidic residues; it reads HPEKPRSKERG. The span at 1149–1169 shows a compositional bias: polar residues; it reads FSQNVSTPTEQQQPLAQNPSG. A phosphoserine mark is found at S1182 and S1185. Residues 1189 to 1198 show a composition bias toward basic and acidic residues; the sequence is EKQRNQKQPE. 5 positions are modified to phosphoserine: S1228, S1254, S1257, S1259, and S1260. Positions 1230–1310 are disordered; that stretch reads EKATNSNRKN…STQLKSRVKN (81 aa). The segment covering 1268 to 1285 has biased composition (polar residues); it reads TTVTKTFKTRKASAQASL. A phosphoserine mark is found at S1315 and S1317. Positions 1319–1338 are disordered; it reads SSTCEPCKNRNRHSAQTEEP. At T1466 the chain carries Phosphothreonine. 7 positions are modified to phosphoserine: S1571, S1695, S1729, S1766, S1769, S1777, and S1783. The segment at 1720–1943 is disordered; the sequence is KRILEGDHGS…AGSPDTESPV (224 aa). Over residues 1756–1768 the composition is skewed to basic and acidic residues; that stretch reads YDAKGPKNVRSDV. Residues 1784–1798 are compositionally biased toward polar residues; sequence INLSKAESQALTNYG. The segment covering 1800 to 1816 has biased composition (acidic residues); sequence GEDENEDEEMEDFEESP. Polar residues-rich tracts occupy residues 1818 to 1828, 1849 to 1858, 1879 to 1901, and 1925 to 1934; these read DIQTSLQANTE, ESTNVPSDQE, ENEQQLNSATHKDSLTTTDSSKQ, and AQETPESSLA. S1959 and S1978 each carry phosphoserine.

The protein belongs to the PCM1 family. In terms of assembly, self-associates. Interacts with BBS4, BBS8, CETN3, HAP1, NDE1, NDEL1, MAP1LC3B, GABARAPAL2, and GABARAP. Interacts with CEP131; the interaction increases in response to ultraviolet light (UV) radiation. Associates with microtubule; association to microtubule is reduced in response to cellular stress, such as ultraviolet light (UV) radiation or heat shock, in a process that requires p38 MAP kinase signaling. Interacts with C2CD3. Interacts with CFAP263. Interacts with SSX2IP. Interacts with CCDC13. Interacts with CEP290. Interacts with PARD6A. Interacts with KIAA0753/OFIP, CEP20/FOR20 and OFD1; the interaction with CEP20/FOR20 and OFD1 may be mediated by KIAA0753/OFIP. Interacts with CCDC66. Interacts with CCDC61. Interacts with DZIP1; localizes DZIP1 and the associated BBSome to centriolar satellite. Interacts with CSTPP1, TTLL1, TPGS1 and LRRC49. Interacts with CFAP53. Ubiquitinated. Undergoes monoubiquitination catalyzed by the E3 ubiquitin-protein ligase MIB1 in proliferating cells, preventing cilia formation. Monoubiquitination by MIB1 is inhibited in response to cellular stress, such as ultraviolet light (UV) radiation or heat shock, resulting in cilia formation initiation. Post-translationally, phosphorylated on multiple serine and threonine residues by DYRK3 during the G2-to-M transition, after the nuclear-envelope breakdown. Phosphorylation by DYRK3 promotes disassembly of pericentriolar material. Phosphorylation at Ser-372 mediated by PLK4 is required to maintain the integrity of centriolar satellites. Expressed in the hippocampus and dentate gyrus, the columnar epithelial cells of bronchioles, the olfactory epithelium, the pericardium and the inner segment of the retina.

It localises to the cytoplasm. The protein localises to the cytoskeleton. The protein resides in the microtubule organizing center. Its subcellular location is the centrosome. It is found in the cytoplasmic granule. It localises to the centriolar satellite. The protein localises to the cilium basal body. Required for centrosome assembly and function. Essential for the correct localization of several centrosomal proteins including CEP250, CETN3, PCNT and NEK2. Required to anchor microtubules to the centrosome. Also involved in cilium biogenesis by recruiting the BBSome, a ciliary protein complex involved in cilium biogenesis, to the centriolar satellites. Recruits the tubulin polyglutamylase complex (TPGC) to centriolar satellites. This is Pericentriolar material 1 protein from Mus musculus (Mouse).